Here is a 165-residue protein sequence, read N- to C-terminus: MVTTRKESAGDASLNAGLEGARVLIVEGRYYEALADELLAGARAVLEAAGVEVEVITVPGALEVPIAAEIALEAAEITGNAVDAVVGLGVVIRGETYHFEIVAGESARGLMDLGMAHALPVGNGILTVDTEAQAWERARVSEGNKGGGAAEAALTLLRLRRRLEA.

Residues Tyr30, 61–63 (ALE), and 90–92 (VVI) contribute to the 5-amino-6-(D-ribitylamino)uracil site. 95 to 96 (ET) is a binding site for (2S)-2-hydroxy-3-oxobutyl phosphate. His98 functions as the Proton donor in the catalytic mechanism. Asn123 serves as a coordination point for 5-amino-6-(D-ribitylamino)uracil. Residue Arg137 participates in (2S)-2-hydroxy-3-oxobutyl phosphate binding.

Belongs to the DMRL synthase family.

The enzyme catalyses (2S)-2-hydroxy-3-oxobutyl phosphate + 5-amino-6-(D-ribitylamino)uracil = 6,7-dimethyl-8-(1-D-ribityl)lumazine + phosphate + 2 H2O + H(+). The protein operates within cofactor biosynthesis; riboflavin biosynthesis; riboflavin from 2-hydroxy-3-oxobutyl phosphate and 5-amino-6-(D-ribitylamino)uracil: step 1/2. In terms of biological role, catalyzes the formation of 6,7-dimethyl-8-ribityllumazine by condensation of 5-amino-6-(D-ribitylamino)uracil with 3,4-dihydroxy-2-butanone 4-phosphate. This is the penultimate step in the biosynthesis of riboflavin. The protein is 6,7-dimethyl-8-ribityllumazine synthase of Xanthobacter autotrophicus (strain ATCC BAA-1158 / Py2).